The primary structure comprises 213 residues: 3-demethoxyubiquinol 3-hydroxylase (213 aa).

Residues E62, E92, H95, E144, E176, and H179 each coordinate Fe cation.

This sequence belongs to the COQ7 family. It depends on Fe cation as a cofactor.

It is found in the cell membrane. The catalysed reaction is a 5-methoxy-2-methyl-3-(all-trans-polyprenyl)benzene-1,4-diol + AH2 + O2 = a 3-demethylubiquinol + A + H2O. It functions in the pathway cofactor biosynthesis; ubiquinone biosynthesis. Functionally, catalyzes the hydroxylation of 2-nonaprenyl-3-methyl-6-methoxy-1,4-benzoquinol during ubiquinone biosynthesis. This Legionella pneumophila subsp. pneumophila (strain Philadelphia 1 / ATCC 33152 / DSM 7513) protein is 3-demethoxyubiquinol 3-hydroxylase.